We begin with the raw amino-acid sequence, 542 residues long: LysM domain-containing protein ARB_00327 (542 aa).

The N-terminal stretch at 1-35 is a signal peptide; it reads MLSSVLFPAMRTLLLLKYVFSLISLSAICCQTVSA. Asn-218, Asn-298, Asn-381, and Asn-415 each carry an N-linked (GlcNAc...) asparagine glycan. Residues 264–310 enclose the LysM 1 domain; sequence RWYGVKKGDYCNLIVLKFGITMDNFIFLNPALNSNCTNLYAEESYCV. The tract at residues 439–484 is disordered; it reads DSDEPTPTTPITTSDDPTSTSATPTTPTTSSKPSPGAPTMTGQPSA. Low complexity predominate over residues 443 to 472; the sequence is PTPTTPITTSDDPTSTSATPTTPTTSSKPS. The LysM 2 domain occupies 487-534; the sequence is KWHTVTNGESCTVIPKTFGITLEQFLAWNPTVKSDCTENFWAGYAYCV.

It localises to the secreted. Functionally, might have a role in sequestration of chitin oligosaccharides (breakdown products of fungal cell walls that are released during invasion and act as triggers of host immunity) to dampen host defense. In Arthroderma benhamiae (strain ATCC MYA-4681 / CBS 112371) (Trichophyton mentagrophytes), this protein is LysM domain-containing protein ARB_00327.